The sequence spans 161 residues: UPF0178 protein BruAb1_1955 (161 aa).

The protein belongs to the UPF0178 family.

In Brucella abortus biovar 1 (strain 9-941), this protein is UPF0178 protein BruAb1_1955.